Consider the following 120-residue polypeptide: Ig heavy chain V region AC38 15.3 (120 aa).

The segment at glutamine 1–arginine 98 is v segment. Cysteine 22 and cysteine 96 are joined by a disulfide. The d segment stretch occupies residues tryptophan 99–arginine 105. Residues tyrosine 106–serine 120 form a j segment region.

This Mus musculus (Mouse) protein is Ig heavy chain V region AC38 15.3.